Consider the following 999-residue polypeptide: Tyrosine-protein kinase Mer (999 aa).

An N-terminal signal peptide occupies residues Met-1 to Arg-20. Residues Ala-21 to Ile-505 are Extracellular-facing. Ig-like C2-type domains follow at residues Pro-81–Ser-186 and Pro-197–Ser-273. Asn-114, Asn-170, Asn-207, Asn-215, Asn-234, Asn-294, Asn-316, Asn-329, Asn-336, Asn-354, Asn-389, Asn-395, Asn-442, and Asn-454 each carry an N-linked (GlcNAc...) asparagine glycan. The cysteines at positions 115 and 175 are disulfide-linked. Residues Cys-218 and Cys-262 are joined by a disulfide bond. Fibronectin type-III domains lie at Pro-286–Gly-381 and Ala-386–Gly-484. A helical membrane pass occupies residues Phe-506–Arg-526. Topologically, residues Lys-527–Met-999 are cytoplasmic. A Phosphoserine modification is found at Ser-543. The 272-residue stretch at Leu-587–Leu-858 folds into the Protein kinase domain. Residues Leu-593–Val-601 and Lys-615 each bind ATP. Asp-723 (proton acceptor) is an active-site residue. A phosphotyrosine; by autocatalysis mark is found at Tyr-749, Tyr-753, Tyr-754, and Tyr-872. At Ser-935 the chain carries Phosphoserine.

Belongs to the protein kinase superfamily. Tyr protein kinase family. AXL/UFO subfamily. Interacts (upon activation) with TNK2; stimulates TNK2 autophosphorylation. Interacts (via N-terminus) with extracellular ligands LGALS3, TUB, TULP1 and GAS6. Interacts with VAV1 in a phosphotyrosine-independent manner. Interacts with TIMD4; this interaction enhances TIMD4-mediated efferocytosis. Post-translationally, autophosphorylated on Tyr-749, Tyr-753 and Tyr-754 in the activation loop allowing full activity. Autophosphorylated on Tyr-872 leading to recruitment of downstream partners of the signaling cascade such as PLCG2. As to expression, not expressed in normal B- and T-lymphocytes but is expressed in numerous neoplastic B- and T-cell lines. Highly expressed in testis, ovary, prostate, lung, and kidney, with lower expression in spleen, small intestine, colon, and liver.

It localises to the cell membrane. It carries out the reaction L-tyrosyl-[protein] + ATP = O-phospho-L-tyrosyl-[protein] + ADP + H(+). In terms of biological role, receptor tyrosine kinase that transduces signals from the extracellular matrix into the cytoplasm by binding to several ligands including LGALS3, TUB, TULP1 or GAS6. Regulates many physiological processes including cell survival, migration, differentiation, and phagocytosis of apoptotic cells (efferocytosis). Ligand binding at the cell surface induces autophosphorylation of MERTK on its intracellular domain that provides docking sites for downstream signaling molecules. Following activation by ligand, interacts with GRB2 or PLCG2 and induces phosphorylation of MAPK1, MAPK2, FAK/PTK2 or RAC1. MERTK signaling plays a role in various processes such as macrophage clearance of apoptotic cells, platelet aggregation, cytoskeleton reorganization and engulfment. Functions in the retinal pigment epithelium (RPE) as a regulator of rod outer segments fragments phagocytosis. Also plays an important role in inhibition of Toll-like receptors (TLRs)-mediated innate immune response by activating STAT1, which selectively induces production of suppressors of cytokine signaling SOCS1 and SOCS3. The sequence is that of Tyrosine-protein kinase Mer (MERTK) from Homo sapiens (Human).